Here is a 113-residue protein sequence, read N- to C-terminus: uncharacterized protein (113 aa).

An SWIM-type zinc finger spans residues 49–91; it reads FFVVVGKEEYVVEGGFCTCPDFLVNLKGKSPCAHIIAVEVAKI.

This is an uncharacterized protein from Archaeoglobus fulgidus (strain ATCC 49558 / DSM 4304 / JCM 9628 / NBRC 100126 / VC-16).